A 637-amino-acid chain; its full sequence is Probable ATP-binding protein YheS (637 aa).

2 ABC transporter domains span residues 2 to 246 and 313 to 527; these read IVFS…AQQQ and LKME…KQEN. ATP contacts are provided by residues 34–41 and 345–352; these read GKNGCGKS and GRNGAGKS. Positions 523–559 are disordered; sequence QKQENQTDEAPKENANSAQARKDQKRREAELRAQTQP. Residues 542–553 show a composition bias toward basic and acidic residues; it reads ARKDQKRREAEL.

This sequence belongs to the ABC transporter superfamily. ABCF family. YheS subfamily.

Genetic data indicate it may be involved in ribosome assembly or function. In Escherichia coli O157:H7, this protein is Probable ATP-binding protein YheS (yheS).